Here is a 301-residue protein sequence, read N- to C-terminus: Syntaxin-17 (301 aa).

An N-acetylserine modification is found at serine 2. Residues 2-227 are Cytoplasmic-facing; sequence SEDEEKVKLR…KNLQKAAKYK (226 aa). N6-acetyllysine is present on lysine 41. Residues 49 to 128 adopt a coiled-coil conformation; that stretch reads DKLHEEHINA…QVKNEEALLQ (80 aa). Residue tyrosine 156 is modified to Phosphotyrosine; by ABL1. One can recognise a t-SNARE coiled-coil homology domain in the interval 161–223; that stretch reads IPRDQNAAES…EEGTKNLQKA (63 aa). Residues 228-248 traverse the membrane as a helical segment; the sequence is LAALPVAGAVIGGVVGGPIGL. Residues 228–274 form a necessary and sufficient for localization to autophagosome region; it reads LAALPVAGAVIGGVVGGPIGLLAGFKVAGIAAALGGGVLGFTGGKLI. Residues 249–253 lie on the Lumenal side of the membrane; sequence LAGFK. Residues 254–274 traverse the membrane as a helical segment; that stretch reads VAGIAAALGGGVLGFTGGKLI. A required for interaction with COPB1, TMED9 and TMED10 region spans residues 273–301; the sequence is LIQRRKQKMMEKLTSSCPDLPSQSDKKCS. The Cytoplasmic segment spans residues 275 to 301; it reads QRRKQKMMEKLTSSCPDLPSQSDKKCS. Serine 288 bears the Phosphoserine mark. The short motif at 298–301 is the Endoplasmic reticulum retention signal element; that stretch reads KKCS.

This sequence belongs to the syntaxin family. In terms of assembly, forms a SNARE complex composed of VAMP8, SNAP29 and STX17 involved in fusion of autophagosome with lysosome. May interact with VAMP7. May interact with VTI1B. Probably interacts with BET1, SCFD1 and SEC22B. Interacts with PTPN2 and ABL1; involved in STX17 phosphorylation. Interacts with COPB1. Interacts with TMED9 and TMED10; the interaction is direct. Interacts with RUBCNL/PACER; promoting targeting of RUBCNL/PACER to autophagosome. Interacts with VAMP8, SNAP29, VPS39 and VPS41; these interactions are increased in the absence of TMEM39A. Interacts with IRGM; promoting STX17 recruitment to autophagosomes. Interacts with ATG8 proteins GABARAP and MAP1LC3B. Interacts with RNF115; this interaction enhances STX17 stability which in turn promotes autophagosome maturation. Interacts with RAB39A (GTP-bound); the interaction promotes autophagosome-lysosome membrane fusion driven by STX17-SNAP29-VAMP8. Interacts with RAB39B; the interaction may promote a different fonction in autophagy as compared with RAB39A. In terms of processing, phosphorylated at Tyr-156 probably by ABL1. Dephosphorylation by PTPN2; regulates exit from the endoplasmic reticulum. Detected in all tissues examined with higher expression in steroidogenic tissues including testis and adrenal gland (at protein level). Highly expressed in liver and testis. Also found in brain, heart, kidney, lung, placenta, skeletal muscle and spleen.

The protein resides in the endoplasmic reticulum membrane. It localises to the smooth endoplasmic reticulum membrane. The protein localises to the endoplasmic reticulum-Golgi intermediate compartment membrane. Its subcellular location is the cytoplasmic vesicle. It is found in the autophagosome membrane. The protein resides in the COPII-coated vesicle membrane. It localises to the cytoplasm. The protein localises to the cytosol. Its subcellular location is the mitochondrion membrane. It is found in the autolysosome membrane. Its function is as follows. SNAREs, soluble N-ethylmaleimide-sensitive factor-attachment protein receptors, are essential proteins for fusion of cellular membranes. SNAREs localized on opposing membranes assemble to form a trans-SNARE complex, an extended, parallel four alpha-helical bundle that drives membrane fusion. STX17 is a SNARE of the autophagosome involved in autophagy through the direct control of autophagosome membrane fusion with the lysosome membrane. May also play a role in the early secretory pathway where it may maintain the architecture of the endoplasmic reticulum-Golgi intermediate compartment/ERGIC and Golgi and/or regulate transport between the endoplasmic reticulum, the ERGIC and the Golgi. The protein is Syntaxin-17 of Rattus norvegicus (Rat).